We begin with the raw amino-acid sequence, 261 residues long: Fructoselysine 6-kinase (261 aa).

The protein belongs to the carbohydrate kinase PfkB family. Monomer.

The enzyme catalyses N(6)-(D-fructosyl)-L-lysine + ATP = N(6)-(6-phospho-D-fructosyl)-L-lysine + ADP + H(+). It functions in the pathway carbohydrate metabolism; fructoselysine degradation; D-glucose 6-phosphate and lysine from fructoselysine: step 1/2. Functionally, catalyzes the ATP-dependent phosphorylation of fructoselysine to fructoselysine 6-phosphate. May function in a fructoselysine degradation pathway that allows S.flexneri to grow on fructoselysine or psicoselysine. The protein is Fructoselysine 6-kinase (frlD) of Shigella flexneri.